The primary structure comprises 493 residues: Cytochrome P450 Tp9025 (493 aa).

The chain crosses the membrane as a helical; Signal-anchor for type II membrane protein span at residues 1 to 21; the sequence is MALYIIFLLIASSFILFSFIF. 2 N-linked (GlcNAc...) asparagine glycosylation sites follow: N209 and N411. C433 lines the heme pocket.

Belongs to the cytochrome P450 family. Heme is required as a cofactor.

It is found in the membrane. The protein operates within secondary metabolite biosynthesis; terpenoid biosynthesis. Its function is as follows. Probably involved in the biosynthesis of germacrene-derived sesquiterpene lactones. In Tanacetum parthenium (Feverfew), this protein is Cytochrome P450 Tp9025.